We begin with the raw amino-acid sequence, 383 residues long: Homoserine O-acetyltransferase (383 aa).

Residues 52-362 enclose the AB hydrolase-1 domain; the sequence is NAILVCHALT…PWGHDAFLLD (311 aa). The active-site Nucleophile is the S158. R227 contributes to the substrate binding site. Active-site residues include D323 and H356. D357 lines the substrate pocket.

It belongs to the AB hydrolase superfamily. MetX family. Homodimer.

It is found in the cytoplasm. The catalysed reaction is L-homoserine + acetyl-CoA = O-acetyl-L-homoserine + CoA. It participates in amino-acid biosynthesis; L-methionine biosynthesis via de novo pathway; O-acetyl-L-homoserine from L-homoserine: step 1/1. Functionally, transfers an acetyl group from acetyl-CoA to L-homoserine, forming acetyl-L-homoserine. The sequence is that of Homoserine O-acetyltransferase from Symbiobacterium thermophilum (strain DSM 24528 / JCM 14929 / IAM 14863 / T).